The following is a 207-amino-acid chain: Probable flagellin 2 (207 aa).

Residues 1–14 (MRVGSRKLRRDEKG) constitute a propeptide that is removed on maturation.

It belongs to the archaeal flagellin family.

The protein localises to the archaeal flagellum. Functionally, flagellin is the subunit protein which polymerizes to form the filaments of archaeal flagella. The chain is Probable flagellin 2 (flaB2) from Archaeoglobus fulgidus (strain ATCC 49558 / DSM 4304 / JCM 9628 / NBRC 100126 / VC-16).